The sequence spans 343 residues: MGNTVTCCVSPDASPKAGRDRRVAERGEPYQTQVELQETDPGPHLQHISDRDFPSDFNDECNPSDHPQASTIFLSKSQTDVREKRKSNHINHVSPGQLTKKYSSCSTIFLDDSTVSQPNLRSTIKCVTLAIYYHIKNRDSDRSLDIFDEKLHPLTREEVTDDYCKHDPDHKHIYRFVRTLFSAAQLTAECAIVTLVYLERLLTYAEIDICPSNWKRIVLGAILLASKVWDDQAVWNVDYCQILKDITVEDMNEMERHFLELLQFNINVPASVYAKYYFDLRSLADDNNLSFLLEPLSKERAQKLEAISRLCEDKYKDLSKAAMRRSISADNLVGIRRSNAIIS.

A disordered region spans residues 1 to 69 (MGNTVTCCVS…ECNPSDHPQA (69 aa)). Positions 17 to 28 (AGRDRRVAERGE) are enriched in basic and acidic residues. The Cyclin N-terminal domain occupies 145-267 (DIFDEKLHPL…FLELLQFNIN (123 aa)).

Belongs to the cyclin family. Cyclin Y subfamily.

In Xenopus laevis (African clawed frog), this protein is Cyclin-Y-like protein 1-B (ccnyl1-b).